We begin with the raw amino-acid sequence, 875 residues long: MSRHHSRFERDYRVGWDRREWSVNGTHGTTSICSVTSGAGGGTASSLSVRPGLLPLPVVPSRLPTPATAPAPCTTGSSEAITSLVASSASAVTTKAPGISKGDSQSQGLATSIRWGQTPINQSTPWDTDEPPSKQMRESDNPGTGPWVTTVAAGNQPTLIAHSYGVAQPPTFSPAVNVQAPVIGVTPSLPPHVGPQLPLMPGHYSLPQPPSQPLSSVVVNMPAQALYASPQPLAVSTLPGVGQVARPGPTAVGNGHMAGPLLPPPPPAQPSATLPSGAPATNGPPTTDSAHGLQMLRTIGVGKYEFTDPGHPREMLKELNQQRRAKAFTDLKIVVEGREFEVHQNVLASCSLYFKDLIQRSVQDSGQGGREKLELVLSNLQADVLELLLEFVYTGSLVIDSANAKTLLEAASKFQFHTFCKVCVSFLEKQLTASNCLGVLAMAEAMQCSELYHMAKAFALQIFPEVAAQEEILSISKDDFIAYVSNDSLNTKAEELVYETVIKWIKKDPATRTQYAAELLAVVRLPFIHPSYLLNVVDNEELIKSSEACRDLVNEAKRYHMLPHARQEMQTPRTRPRLSAGVAEVIVLVGGRQMVGMTQRSLVAVTCWNPQNNKWYPLASLPFYDREFFSVVSAGDNIYLSGGMESGVTLADVWCYMSLLDNWNLVSRMTVPRCRHNSLVYDGKIYTLGGLGVAGNVDHVERYDTITNQWEAVAPLPKAVHSAAATVCGGKIYVFGGVNEAGRAAGVLQSYVPQTNTWSFIESPMIDNKYAPAVTLNGFVFILGGAYARATTIYDPEKGNIKAGPNMNHSRQFCSAVVLDGKIYATGGIVSSEGPALGNMEAYEPTTNTWTLLPHMPCPVFRHGCVVIKKYIQSG.

Positions 115-126 are enriched in polar residues; sequence WGQTPINQSTPW. 2 disordered regions span residues 115–145 and 248–291; these read WGQTPINQSTPWDTDEPPSKQMRESDNPGTG and GPTA…DSAH. A compositionally biased stretch (basic and acidic residues) spans 131–140; sequence PPSKQMRESD. Positions 329-401 constitute a BTB domain; sequence TDLKIVVEGR…VYTGSLVIDS (73 aa). Kelch repeat units follow at residues 585 to 635, 637 to 683, 684 to 730, 732 to 778, 779 to 821, and 822 to 870; these read VIVL…VSAG, NIYL…VYDG, KIYT…VCGG, IYVF…TLNG, FVFI…VLDG, and KIYA…VIKK.

The sequence is that of Kelch-like protein 29 (KLHL29) from Homo sapiens (Human).